Consider the following 337-residue polypeptide: Holliday junction branch migration complex subunit RuvB (337 aa).

The segment at 1–179 (MTHQVSVLHQ…FSFTGRMSYY (179 aa)) is large ATPase domain (RuvB-L). ATP is bound by residues leucine 18, arginine 19, glycine 60, lysine 63, threonine 64, serine 65, 126–128 (EDY), arginine 169, tyrosine 179, and arginine 216. A Mg(2+)-binding site is contributed by threonine 64. Residues 180-250 (SDEDLTTILK…VAEKALAMLL (71 aa)) form a small ATPAse domain (RuvB-S) region. The head domain (RuvB-H) stretch occupies residues 253 to 337 (DWGLNEIDIK…DNLQSLGEEK (85 aa)). The DNA site is built by lysine 308 and arginine 313.

This sequence belongs to the RuvB family. Homohexamer. Forms an RuvA(8)-RuvB(12)-Holliday junction (HJ) complex. HJ DNA is sandwiched between 2 RuvA tetramers; dsDNA enters through RuvA and exits via RuvB. An RuvB hexamer assembles on each DNA strand where it exits the tetramer. Each RuvB hexamer is contacted by two RuvA subunits (via domain III) on 2 adjacent RuvB subunits; this complex drives branch migration. In the full resolvosome a probable DNA-RuvA(4)-RuvB(12)-RuvC(2) complex forms which resolves the HJ.

Its subcellular location is the cytoplasm. It carries out the reaction ATP + H2O = ADP + phosphate + H(+). Its function is as follows. The RuvA-RuvB-RuvC complex processes Holliday junction (HJ) DNA during genetic recombination and DNA repair, while the RuvA-RuvB complex plays an important role in the rescue of blocked DNA replication forks via replication fork reversal (RFR). RuvA specifically binds to HJ cruciform DNA, conferring on it an open structure. The RuvB hexamer acts as an ATP-dependent pump, pulling dsDNA into and through the RuvAB complex. RuvB forms 2 homohexamers on either side of HJ DNA bound by 1 or 2 RuvA tetramers; 4 subunits per hexamer contact DNA at a time. Coordinated motions by a converter formed by DNA-disengaged RuvB subunits stimulates ATP hydrolysis and nucleotide exchange. Immobilization of the converter enables RuvB to convert the ATP-contained energy into a lever motion, pulling 2 nucleotides of DNA out of the RuvA tetramer per ATP hydrolyzed, thus driving DNA branch migration. The RuvB motors rotate together with the DNA substrate, which together with the progressing nucleotide cycle form the mechanistic basis for DNA recombination by continuous HJ branch migration. Branch migration allows RuvC to scan DNA until it finds its consensus sequence, where it cleaves and resolves cruciform DNA. The chain is Holliday junction branch migration complex subunit RuvB from Chlamydia caviae (strain ATCC VR-813 / DSM 19441 / 03DC25 / GPIC) (Chlamydophila caviae).